The primary structure comprises 514 residues: 2,3-bisphosphoglycerate-independent phosphoglycerate mutase (514 aa).

Aspartate 14 and serine 64 together coordinate Mn(2+). Catalysis depends on serine 64, which acts as the Phosphoserine intermediate. Substrate is bound by residues histidine 125, 155–156, arginine 187, arginine 193, 263–266, and lysine 336; these read RD and RADR. Mn(2+) is bound by residues aspartate 403, histidine 407, aspartate 444, histidine 445, and histidine 463.

It belongs to the BPG-independent phosphoglycerate mutase family. In terms of assembly, monomer. Mn(2+) is required as a cofactor.

The catalysed reaction is (2R)-2-phosphoglycerate = (2R)-3-phosphoglycerate. It participates in carbohydrate degradation; glycolysis; pyruvate from D-glyceraldehyde 3-phosphate: step 3/5. Its function is as follows. Catalyzes the interconversion of 2-phosphoglycerate and 3-phosphoglycerate. This is 2,3-bisphosphoglycerate-independent phosphoglycerate mutase from Salmonella choleraesuis (strain SC-B67).